We begin with the raw amino-acid sequence, 196 residues long: Adenylate kinase (196 aa).

ATP is bound at residue 9 to 17; the sequence is GIPGVGKST.

Belongs to the archaeal adenylate kinase family.

The protein resides in the cytoplasm. The catalysed reaction is AMP + ATP = 2 ADP. This chain is Adenylate kinase (adkA), found in Pyrococcus horikoshii (strain ATCC 700860 / DSM 12428 / JCM 9974 / NBRC 100139 / OT-3).